The chain runs to 157 residues: Oleosin-B1 (157 aa).

Residues 2–20 (GILRKKKHERNASFKSVLT) are polar. A hydrophobic region spans residues 21-138 (SILATQAATF…AAPAAAPAAA (118 aa)). Transmembrane regions (helical) follow at residues 22–42 (ILAT…LAGT), 45–65 (AFIA…PAGI), and 72–92 (TGLA…LWLY). A run of 9 repeats spans residues 119–122 (PRAA), 123–126 (PAAA), 127–130 (PAAA), 131–134 (PAAA), 135–138 (PAAA), 139–142 (PAPK), 143–146 (PAAA), 147–150 (PAPK), and 151–154 (PAAP). Residues 119-122 (PRAA) form a 9 X 4 AA tandem repeats of P-[AR]-[AP]-[AKP] region. The tract at residues 137–157 (AAPAPKPAAAPAPKPAAPPAL) is disordered. Residues 138–157 (APAPKPAAAPAPKPAAPPAL) are compositionally biased toward pro residues.

Belongs to the oleosin family. As to expression, the full-length protein is found in the tapetal lipid bodies of immature anthers, the proteolytically cleaved C-terminal product is found on the coats of pollen grains. Highest expression is in microspores entering and undergoing mitosis. No expression is observed in male-sterile plants, green tissues or roots.

Its subcellular location is the lipid droplet. It localises to the membrane. Many of the major pollen coat proteins are derived from endoproteolytic cleavage of oleosin-like proteins. The chain is Oleosin-B1 (OlnB1) from Brassica napus (Rape).